The following is a 181-amino-acid chain: Crossover junction endodeoxyribonuclease RuvC (181 aa).

Residues D8, E67, and D139 contribute to the active site. Mg(2+)-binding residues include D8, E67, and D139.

Belongs to the RuvC family. Homodimer which binds Holliday junction (HJ) DNA. The HJ becomes 2-fold symmetrical on binding to RuvC with unstacked arms; it has a different conformation from HJ DNA in complex with RuvA. In the full resolvosome a probable DNA-RuvA(4)-RuvB(12)-RuvC(2) complex forms which resolves the HJ. Mg(2+) serves as cofactor.

It is found in the cytoplasm. The catalysed reaction is Endonucleolytic cleavage at a junction such as a reciprocal single-stranded crossover between two homologous DNA duplexes (Holliday junction).. Its function is as follows. The RuvA-RuvB-RuvC complex processes Holliday junction (HJ) DNA during genetic recombination and DNA repair. Endonuclease that resolves HJ intermediates. Cleaves cruciform DNA by making single-stranded nicks across the HJ at symmetrical positions within the homologous arms, yielding a 5'-phosphate and a 3'-hydroxyl group; requires a central core of homology in the junction. The consensus cleavage sequence is 5'-(A/T)TT(C/G)-3'. Cleavage occurs on the 3'-side of the TT dinucleotide at the point of strand exchange. HJ branch migration catalyzed by RuvA-RuvB allows RuvC to scan DNA until it finds its consensus sequence, where it cleaves and resolves the cruciform DNA. The protein is Crossover junction endodeoxyribonuclease RuvC of Acinetobacter baumannii (strain SDF).